Reading from the N-terminus, the 235-residue chain is tRNA pseudouridine synthase B (235 aa).

Asp48 (nucleophile) is an active-site residue.

Belongs to the pseudouridine synthase TruB family. Type 1 subfamily.

The enzyme catalyses uridine(55) in tRNA = pseudouridine(55) in tRNA. In terms of biological role, responsible for synthesis of pseudouridine from uracil-55 in the psi GC loop of transfer RNAs. In Parabacteroides distasonis (strain ATCC 8503 / DSM 20701 / CIP 104284 / JCM 5825 / NCTC 11152), this protein is tRNA pseudouridine synthase B.